The chain runs to 201 residues: Retinol-binding protein 4 (201 aa).

The N-terminal stretch at 1–18 (MEWVWALVLLAALGSGRG) is a signal peptide. 3 disulfide bridges follow: C22/C178, C88/C192, and C138/C147. Q116 lines the substrate pocket. Residue R139 is modified to Omega-N-methylarginine.

It belongs to the calycin superfamily. Lipocalin family. In terms of assembly, interacts with TTR. Interaction with TTR prevents its loss by filtration through the kidney glomeruli. Interacts with STRA6.

It localises to the secreted. Functionally, retinol-binding protein that mediates retinol transport in blood plasma. Delivers retinol from the liver stores to the peripheral tissues. Transfers the bound all-trans retinol to STRA6, that then facilitates retinol transport across the cell membrane. The sequence is that of Retinol-binding protein 4 (RBP4) from Oryctolagus cuniculus (Rabbit).